The primary structure comprises 131 residues: Profilin-1 (131 aa).

It belongs to the profilin family. As to quaternary structure, occurs in many kinds of cells as a complex with monomeric actin in a 1:1 ratio.

Its subcellular location is the cytoplasm. The protein localises to the cytoskeleton. Its function is as follows. Binds to actin and affects the structure of the cytoskeleton. At high concentrations, profilin prevents the polymerization of actin, whereas it enhances it at low concentrations. By binding to PIP2, it inhibits the formation of IP3 and DG. The protein is Profilin-1 (PRO1) of Triticum aestivum (Wheat).